The following is a 428-amino-acid chain: Autophagy-related protein 14 (428 aa).

Residues 82-143 (QEAIDRTAEI…RKKQLDKVKD (62 aa)) adopt a coiled-coil conformation.

The protein belongs to the ATG14 family. Component of the autophagy-specific VPS34 PI3-kinase complex I.

Its subcellular location is the preautophagosomal structure membrane. The protein localises to the vacuole membrane. Required for cytoplasm to vacuole transport (Cvt) and autophagy as a part of the autophagy-specific VPS34 PI3-kinase complex I. This complex is essential to recruit the ATG8-phosphatidylinositol conjugate and the ATG12-ATG5 conjugate to the pre-autophagosomal structure. ATG14 mediates the specific binding of the VPS34 PI3-kinase complex I to the preautophagosomal structure (PAS). Plays a crucial role in hyphal development, conidiogenesis and pathogenicity. Also required for glycogen mobilization, quantity of lipid bodies, and the turgor pressure of appressoria. The sequence is that of Autophagy-related protein 14 from Pyricularia oryzae (strain 70-15 / ATCC MYA-4617 / FGSC 8958) (Rice blast fungus).